Here is a 73-residue protein sequence, read N- to C-terminus: Disintegrin mojastin-2 (73 aa).

A Disintegrin domain is found at 1–73; the sequence is EAGEECDCGS…ADCPRNGLYG (73 aa). Intrachain disulfides connect C6–C21, C8–C16, C15–C38, C29–C35, C34–C59, and C47–C66. Residues 51 to 53 carry the Cell attachment site motif; sequence RGD.

This sequence belongs to the venom metalloproteinase (M12B) family. P-II subfamily. P-IIa sub-subfamily. In terms of assembly, monomer (disintegrin). As to expression, expressed by the venom gland.

It is found in the secreted. Its function is as follows. Inhibits the three processes involved in platelet function (adhesion, activation and aggregation). It inhibits platelet adhesion to fibronectin with an IC(50) of 58.6 nM. It inhibits ATP release from platelet induced by ADP with an IC(50) of 19.5 nM on platelet-rich plasma, probably by binding to ADP receptors (P2RY1 and P2RY12). Finally, it inhibits ADP-induced platelet aggregation with IC(50) of 44.7 nM on platelet-rich plasma and 19.3 nM on whole blood, probably by binding to alpha-IIb/beta-3 (ITGA2B/ITGB3). In terms of biological role, inhibits ADP-induced platelet aggregation (IC(50) = 13.8 nM) probably by binding to alpha-IIb/beta-3 (ITGA2B/ITGB3) located on the platelet surface. The chain is Disintegrin mojastin-2 from Crotalus scutulatus scutulatus (Mojave rattlesnake).